Reading from the N-terminus, the 191-residue chain is ATP-dependent Clp protease proteolytic subunit 1 (191 aa).

Catalysis depends on Ser91, which acts as the Nucleophile. Residue His116 is part of the active site.

Belongs to the peptidase S14 family. Fourteen ClpP subunits assemble into 2 heptameric rings which stack back to back to give a disk-like structure with a central cavity, resembling the structure of eukaryotic proteasomes.

The protein resides in the cytoplasm. The enzyme catalyses Hydrolysis of proteins to small peptides in the presence of ATP and magnesium. alpha-casein is the usual test substrate. In the absence of ATP, only oligopeptides shorter than five residues are hydrolyzed (such as succinyl-Leu-Tyr-|-NHMec, and Leu-Tyr-Leu-|-Tyr-Trp, in which cleavage of the -Tyr-|-Leu- and -Tyr-|-Trp bonds also occurs).. Functionally, cleaves peptides in various proteins in a process that requires ATP hydrolysis. Has a chymotrypsin-like activity. Plays a major role in the degradation of misfolded proteins. The sequence is that of ATP-dependent Clp protease proteolytic subunit 1 from Chlamydia caviae (strain ATCC VR-813 / DSM 19441 / 03DC25 / GPIC) (Chlamydophila caviae).